The following is a 477-amino-acid chain: Maternal protein exuperantia-2 (477 aa).

Basic and acidic residues predominate over residues 196–209 (KDGNSTKEDEHENP). 2 disordered regions span residues 196-226 (KDGNSTKEDEHENPEGNSSITDNSGHKNQKQ) and 384-477 (TIKP…FADI). Basic residues predominate over residues 385-402 (IKPRCKRSGNGTRRRNRA).

In terms of biological role, ensures the proper localization of the mRNA of the bicoid gene to the anterior regions of the oocyte thus playing a fundamental role in the establishment of the polarity of the oocyte. May bind the bcd mRNA. This Drosophila pseudoobscura pseudoobscura (Fruit fly) protein is Maternal protein exuperantia-2 (exu2).